A 252-amino-acid polypeptide reads, in one-letter code: 5'-nucleotidase SurE (252 aa).

Residues Asp8, Asp9, Ser39, and Asn91 each coordinate a divalent metal cation.

This sequence belongs to the SurE nucleotidase family. A divalent metal cation is required as a cofactor.

The protein localises to the cytoplasm. The enzyme catalyses a ribonucleoside 5'-phosphate + H2O = a ribonucleoside + phosphate. Functionally, nucleotidase that shows phosphatase activity on nucleoside 5'-monophosphates. The polypeptide is 5'-nucleotidase SurE (Bordetella bronchiseptica (strain ATCC BAA-588 / NCTC 13252 / RB50) (Alcaligenes bronchisepticus)).